The following is a 1165-amino-acid chain: Integrin alpha-L (1165 aa).

The signal sequence occupies residues 1–23; the sequence is MNSCIIVLRLLLSGPFVFAPAWS. Residues 24–1084 lie on the Extracellular side of the membrane; that stretch reads YNLDVRHVQN…MKVDLVYEKE (1061 aa). FG-GAP repeat units lie at residues 29 to 80 and 81 to 138; these read RHVQ…DCLP and VTLS…GPVL. A glycan (N-linked (GlcNAc...) asparagine) is linked at N33. A disulfide bridge connects residues C71 and C78. N86 is a glycosylation site (N-linked (GlcNAc...) asparagine). C108 and C126 are joined by a disulfide. In terms of domain architecture, VWFA spans 153-324; the sequence is DLVFLFDGSM…EKLKDLFTEL (172 aa). N-linked (GlcNAc...) asparagine glycosylation occurs at N185. 5 FG-GAP repeats span residues 335–386, 387–442, 443–503, 504–560, and 564–624; these read SKQD…SSTF, VGNE…GGPW, SQIQ…EFQM, VSEL…GLSP, and QRIE…FSPA. Residues D465, D467, D469, E473, D527, N529, D531, D535, D587, D591, and D595 each contribute to the Ca(2+) site. N-linked (GlcNAc...) asparagine glycosylation is found at N646, N667, and N723. Cysteines 650 and 704 form a disulfide. 2 cysteine pairs are disulfide-bonded: C768–C774 and C842–C858. N859, N894, and N929 each carry an N-linked (GlcNAc...) asparagine glycan. 2 disulfide bridges follow: C994/C1009 and C1017/C1048. N1056 and N1067 each carry an N-linked (GlcNAc...) asparagine glycan. Residues 1085-1105 traverse the membrane as a helical segment; that stretch reads MLYLYVLSGIGGLLLLFLIFI. Residues 1106-1165 are Cytoplasmic-facing; that stretch reads ALYKVGFFKRNLKEKMEANVDASSEIPGEDAGQPELEKECKDPGCLEPLQKTDEDGSGGD. The GFFKR motif motif lies at 1111-1115; the sequence is GFFKR. Positions 1123-1165 are disordered; the sequence is ANVDASSEIPGEDAGQPELEKECKDPGCLEPLQKTDEDGSGGD. Residues 1140–1159 show a composition bias toward basic and acidic residues; that stretch reads ELEKECKDPGCLEPLQKTDE.

It belongs to the integrin alpha chain family. In terms of assembly, heterodimer of an alpha and a beta subunit. The ITGAL alpha subunit associates with the ITGB2 beta subunit. Interacts with THBD. Interacts with CD226. In terms of processing, in resting T-cells, up to 40% of surface ITGAL is constitutively phosphorylated. Phosphorylation causes conformational changes needed for ligand binding and is necessary for the activation by some physiological agents.

Its subcellular location is the cell membrane. In terms of biological role, integrin ITGAL/ITGB2 is a receptor for ICAM1, ICAM2, ICAM3 and ICAM4. Integrin ITGAL/ITGB2 is a receptor for F11R. Integrin ITGAL/ITGB2 is a receptor for the secreted form of ubiquitin-like protein ISG15; the interaction is mediated by ITGAL. Involved in a variety of immune phenomena including leukocyte-endothelial cell interaction, cytotoxic T-cell mediated killing, and antibody dependent killing by granulocytes and monocytes. Contributes to natural killer cell cytotoxicity. Involved in leukocyte adhesion and transmigration of leukocytes including T-cells and neutrophils. Acts as a platform at the immunological synapse to translate TCR engagement and density of the ITGAL ligand ICAM1 into graded adhesion. Required for generation of common lymphoid progenitor cells in bone marrow, indicating the role in lymphopoiesis. Integrin ITGAL/ITGB2 in association with ICAM3, contributes to apoptotic neutrophil phagocytosis by macrophages. This is Integrin alpha-L from Bos taurus (Bovine).